We begin with the raw amino-acid sequence, 665 residues long: E3 ubiquitin-protein ligase cblA (665 aa).

The interval 30 to 50 is disordered; the sequence is NNNNNINNNNNNNNINSNNNG. The tract at residues 109–231 is 4H; the sequence is TSLVNYIHYE…NNENNNNNNN (123 aa). In terms of domain architecture, Cbl-PTB spans 109-400; it reads TSLVNYIHYE…PDIFKSILSF (292 aa). Residues 232–306 are EF-hand-like; the sequence is NYNPYELLSN…FKLSVFIKWF (75 aa). Ca(2+)-binding residues include D287, T289, D291, and Y293. The interval 307 to 400 is SH2-like; it reads GALPVSLGIF…PDIFKSILSF (94 aa). Disordered regions lie at residues 437 to 456 and 467 to 609; these read ENNNNQNNNQNNNNNNINTF and DSSN…NNNN. Residues 467 to 478 show a composition bias toward low complexity; that stretch reads DSSNSSDTNKSP. Positions 479–544 form a coiled coil; the sequence is TKSRKSSFKN…NNNNNNNNNN (66 aa). Positions 486-512 are enriched in basic and acidic residues; the sequence is FKNDKDKKEKEKEKGKDKEKEKERVSD. 2 stretches are compositionally biased toward low complexity: residues 530–561 and 571–609; these read NNNNNNNNNNNNNNNNNNNNNNNNNNSSNNNN and TSNGSSGNNNNNNNNNNNNNNNNNNNNSSSTTKRNNNNN. The RING-type zinc finger occupies 618–653; sequence CTVCMDNEINTVFLECGHLSCCSLCSVKLKKCPICR.

Ubiquitinated.

It localises to the cytoplasm. Its subcellular location is the nucleus. It catalyses the reaction S-ubiquitinyl-[E2 ubiquitin-conjugating enzyme]-L-cysteine + [acceptor protein]-L-lysine = [E2 ubiquitin-conjugating enzyme]-L-cysteine + N(6)-ubiquitinyl-[acceptor protein]-L-lysine.. It functions in the pathway protein modification; protein ubiquitination. Acts as an E3 ubiquitin-protein ligase, which accepts ubiquitin from specific E2 ubiquitin-conjugating enzymes, and then transfers it to substrates promoting their degradation by the proteasome. Up-regulates STATc tyrosine phosphorylation via an inhibitory effect on ptpC accumulation. Recognizes activated receptor tyrosine kinases, RTKs and terminates signaling. This chain is E3 ubiquitin-protein ligase cblA (cblA-1), found in Dictyostelium discoideum (Social amoeba).